The sequence spans 194 residues: Cell division protein SepF (194 aa).

2 disordered regions span residues 35–54 (DHRS…DSSP) and 159–194 (SAPS…AGGL).

This sequence belongs to the SepF family. In terms of assembly, homodimer. Interacts with FtsZ.

Its subcellular location is the cytoplasm. Its function is as follows. Cell division protein that is part of the divisome complex and is recruited early to the Z-ring. Probably stimulates Z-ring formation, perhaps through the cross-linking of FtsZ protofilaments. Its function overlaps with FtsA. This chain is Cell division protein SepF, found in Prochlorococcus marinus (strain MIT 9313).